The sequence spans 549 residues: Beta-hexosaminidase Amuc_0868 (549 aa).

A signal peptide spans 1-28 (MISKCTFSATVFSLFSLCWGAPSSPVLE). R161 contacts substrate. Active-site charge relay system residues include D190 and H260. Residue D326 participates in substrate binding. E327 (charge relay system) is an active-site residue. Substrate-binding positions include W393, 420 to 422 (YFD), and 474 to 476 (WTE). Residues 526-549 (GVNYKRPDNGAPAQPKAVITRERR) are disordered.

It belongs to the glycosyl hydrolase 20 family.

The enzyme catalyses Hydrolysis of terminal non-reducing N-acetyl-D-hexosamine residues in N-acetyl-beta-D-hexosaminides.. Its activity is regulated as follows. Inhibited strongly by Cu(2+), Zn(2+), Cd(2+) and Ni(2+) ions. No effect on activity with Na(+), Li(+), K(+), Ca(2+), Mg(2+) or Mn(2+) ions. Its function is as follows. Potentially capable of cleaving the specific glycoside linkages in the process of mucin degradation in human intestinal tract. Hydrolyzes chromogenic substrates pNP-beta-GlcNAc with high activity and pNP-beta-GalNAc to a lesser extent, but not pNP-beta-glucose or pNP-beta-galactose. The sequence is that of Beta-hexosaminidase Amuc_0868 from Akkermansia muciniphila (strain ATCC BAA-835 / DSM 22959 / JCM 33894 / BCRC 81048 / CCUG 64013 / CIP 107961 / Muc).